A 338-amino-acid polypeptide reads, in one-letter code: Clathrin light chain 1 (338 aa).

A disordered region spans residues 1–111 (MATFDDGDFP…NEMREEGFQR (111 aa)). Composition is skewed to polar residues over residues 29–47 (SEAQ…SSFN) and 61–73 (SSPN…PFES). The span at 102–111 (NEMREEGFQR) shows a compositional bias: basic and acidic residues. Residues 102–163 (NEMREEGFQR…TIETNKTDNR (62 aa)) are involved in binding clathrin heavy chain. Residues 122 to 142 (LEEKEKKEKEMRNQIITEAED) are a coiled coil. A disordered region spans residues 192 to 338 (IPREVPNIEK…VTEAEGTKAE (147 aa)). Residues 197–212 (PNIEKKRGKKDPDKKP) are compositionally biased toward basic and acidic residues. Over residues 241 to 253 (NPPPHMMPPPPPA) the composition is skewed to pro residues. Positions 254–304 (KDAKDGKDAKDGKDAKTGKDGKDAKGGKDAKDLKDGKPADPKVTEEKRPSP) are enriched in basic and acidic residues.

This sequence belongs to the clathrin light chain family. In terms of assembly, clathrin coats are formed from molecules containing 3 heavy chains and 3 light chains.

The protein resides in the cytoplasmic vesicle membrane. It is found in the membrane. Its subcellular location is the coated pit. Functionally, clathrin is the major protein of the polyhedral coat of coated pits and vesicles. In Arabidopsis thaliana (Mouse-ear cress), this protein is Clathrin light chain 1.